We begin with the raw amino-acid sequence, 867 residues long: Prominin-1 (867 aa).

The first 19 residues, 1–19 (MALVFSALLLLGLCGKISS), serve as a signal peptide directing secretion. At 20-107 (EGQPAFHNTP…VLALKIALYE (88 aa)) the chain is on the extracellular side. The chain crosses the membrane as a helical span at residues 108 to 128 (IGVLICAILGLLFIILMPLVG). Residues 129–158 (CFFCMCRCCNKCGGEMHQRQKQNAPCRRKC) lie on the Cytoplasmic side of the membrane. A helical membrane pass occupies residues 159–179 (LGLSLLVICLLMSLGIIYGFV). The Extracellular portion of the chain corresponds to 180–434 (ANQQTRTRIK…LPKLEEYDSY (255 aa)). An N6-acetyllysine mark is found at Lys-226, Lys-258, and Lys-265. Residues Asn-273, Asn-291, Asn-332, Asn-374, and Asn-415 are each glycosylated (N-linked (GlcNAc...) asparagine). Residues 435 to 455 (WWLGGLIVCFLLTLIVTFFFL) traverse the membrane as a helical segment. At 456–487 (GLLCGVFGYDKHATPTRRGCVSNTGGIFLMAG) the chain is on the cytoplasmic side. A helical transmembrane segment spans residues 488 to 508 (VGFGFLFCWILMILVVLTFVV). Residues 509–794 (GANVEKLLCE…LCGYVADPLN (286 aa)) are Extracellular-facing. 3 N-linked (GlcNAc...) asparagine glycosylation sites follow: Asn-554, Asn-581, and Asn-732. A helical membrane pass occupies residues 795–815 (LFWFGIGKATVLLLPAVIIAI). Over 816–867 (KLAKYYRRMDSEDVYDDVETVPMKNLEIGSNGYHKDHLYGVHNPVMTSPSRY) the chain is Cytoplasmic. Ser-865 bears the Phosphoserine mark.

This sequence belongs to the prominin family. In terms of assembly, interacts with CDHR1 and with actin filaments. Interacts with NAT8 and NAT8B. In terms of processing, acetylation at Lys-226, Lys-258 and Lys-265 by NAT8 and NAT8B may control PROM1 protein expression and its function in cell apoptosis. In terms of tissue distribution, in the submandibular gland, expressed on the apical side of epithelial cells. In the parotid gland, expressed in the intercalated ducts. In the sublingual gland, expressed in intercalated ducts. In the extraorbital lacrimal gland, expressed in the intercalated tubules and larger intralobular ducts. Expressed in the retina. Present in urine within small membrane particles (at protein level). In the embryo, expressed on the apical side of neuroepithelial cells and of other epithelia such as lung buds, gut and ureter buds. In the adult, expressed at the apical side of the kidney tubules and of the ependymal layer of the brain. Not expressed in gut, liver, lung, pituitary, adrenal, heart or spleen. Localized to the nascent disk membranes at the base of the rod outer segment in the retina (at protein level).

The protein resides in the apical cell membrane. Its subcellular location is the cell projection. It is found in the microvillus membrane. It localises to the cilium. The protein localises to the photoreceptor outer segment. The protein resides in the endoplasmic reticulum. Its subcellular location is the endoplasmic reticulum-Golgi intermediate compartment. Its function is as follows. May play a role in cell differentiation, proliferation and apoptosis. Binds cholesterol in cholesterol-containing plasma membrane microdomains and may play a role in the organization of the apical plasma membrane in epithelial cells. During early retinal development acts as a key regulator of disk morphogenesis. Involved in regulation of MAPK and Akt signaling pathways. In neuroblastoma cells suppresses cell differentiation such as neurite outgrowth in a RET-dependent manner. In Mus musculus (Mouse), this protein is Prominin-1 (Prom1).